The chain runs to 244 residues: Probable transcriptional regulatory protein CHAB381_1426 (244 aa).

This sequence belongs to the TACO1 family.

It localises to the cytoplasm. The polypeptide is Probable transcriptional regulatory protein CHAB381_1426 (Campylobacter hominis (strain ATCC BAA-381 / DSM 21671 / CCUG 45161 / LMG 19568 / NCTC 13146 / CH001A)).